Here is a 315-residue protein sequence, read N- to C-terminus: Leucine-rich repeat-containing protein 75B (315 aa).

Positions 1 to 23 (MGARLGRRAGPEAGSEAGAAAGC) are disordered. A compositionally biased stretch (low complexity) spans 11–23 (PEAGSEAGAAAGC). LRR repeat units lie at residues 182-195 (LAVL…LSDE) and 207-220 (LPRL…GNRL). Residues 284 to 315 (PEGSAAGATTPASTWDSTAAGLGPEPQACCAR) form a disordered region. Over residues 286–297 (GSAAGATTPAST) the composition is skewed to low complexity.

This sequence belongs to the LRRC75 family.

Functionally, may suppress myogenic differentiation by modulating MYOG expression and Erk1/2 signaling. The protein is Leucine-rich repeat-containing protein 75B of Homo sapiens (Human).